A 314-amino-acid chain; its full sequence is DNA-directed RNA polymerase subunit alpha (314 aa).

An alpha N-terminal domain (alpha-NTD) region spans residues 1–228; sequence MIEIEKPKIE…EHLNIFVGLT (228 aa). The interval 245–314 is alpha C-terminal domain (alpha-CTD); the sequence is KEKVMEMTIE…DLGLGLRDDD (70 aa).

This sequence belongs to the RNA polymerase alpha chain family. As to quaternary structure, homodimer. The RNAP catalytic core consists of 2 alpha, 1 beta, 1 beta' and 1 omega subunit. When a sigma factor is associated with the core the holoenzyme is formed, which can initiate transcription.

It carries out the reaction RNA(n) + a ribonucleoside 5'-triphosphate = RNA(n+1) + diphosphate. DNA-dependent RNA polymerase catalyzes the transcription of DNA into RNA using the four ribonucleoside triphosphates as substrates. This Oceanobacillus iheyensis (strain DSM 14371 / CIP 107618 / JCM 11309 / KCTC 3954 / HTE831) protein is DNA-directed RNA polymerase subunit alpha.